The chain runs to 132 residues: Fatty acid-binding protein, adipocyte (132 aa).

Position 2 is an N-acetylcysteine (Cys2). A Phosphoserine modification is found at Ser13. Position 20 is a phosphotyrosine; by Tyr-kinases (Tyr20). A Nuclear localization signal motif is present at residues 22-32 (KEVGVGFATRK). Residue 127–129 (RVY) participates in a fatty acid binding.

Belongs to the calycin superfamily. Fatty-acid binding protein (FABP) family. Monomer. Homodimer. Interacts with PPARG.

The protein resides in the cytoplasm. Its subcellular location is the nucleus. Functionally, lipid transport protein in adipocytes. Binds both long chain fatty acids and retinoic acid. Delivers long-chain fatty acids and retinoic acid to their cognate receptors in the nucleus. In Rattus norvegicus (Rat), this protein is Fatty acid-binding protein, adipocyte (Fabp4).